The sequence spans 228 residues: U1 small nuclear ribonucleoprotein C (228 aa).

Residues 4 to 36 (YYCEYCDIYLTHSSPVGRRQHVQGRKHISAKIE) form a Matrin-type zinc finger. Over residues 179-190 (LVKDNPNEERNG) the composition is skewed to basic and acidic residues. A disordered region spans residues 179–228 (LVKDNPNEERNGDSAIANQPSTMHHEEDQDDPANATGGTANNNDNVSINA). Low complexity predominate over residues 211–221 (ANATGGTANNN).

Belongs to the U1 small nuclear ribonucleoprotein C family. As to quaternary structure, U1 snRNP is composed of the 7 core Sm proteins B/B', D1, D2, D3, E, F and G that assemble in a heptameric protein ring on the Sm site of the small nuclear RNA to form the core snRNP, and at least 3 U1 snRNP-specific proteins U1-70K, U1-A and U1-C. U1-C interacts with U1 snRNA and the 5' splice-site region of the pre-mRNA.

Its subcellular location is the nucleus. In terms of biological role, component of the spliceosomal U1 snRNP, which is essential for recognition of the pre-mRNA 5' splice-site and the subsequent assembly of the spliceosome. U1-C is directly involved in initial 5' splice-site recognition for both constitutive and regulated alternative splicing. The interaction with the 5' splice-site seems to precede base-pairing between the pre-mRNA and the U1 snRNA. Stimulates commitment or early (E) complex formation by stabilizing the base pairing of the 5' end of the U1 snRNA and the 5' splice-site region. This Plasmodium knowlesi (strain H) protein is U1 small nuclear ribonucleoprotein C.